A 144-amino-acid chain; its full sequence is Putative pre-16S rRNA nuclease (144 aa).

This sequence belongs to the YqgF nuclease family.

It is found in the cytoplasm. Its function is as follows. Could be a nuclease involved in processing of the 5'-end of pre-16S rRNA. This is Putative pre-16S rRNA nuclease from Acaryochloris marina (strain MBIC 11017).